The sequence spans 271 residues: MRLPTVLIGRYIPVDSIVHRLDPRAKLLGMIFLISAVLIVPNLLFYLVPGLAIFLLMFLSRTGFKIYLAGLRSLWFFLVFAVLVQFFSSSEGEKIFWMITDRAIWSAVYIMLRLVLIILLAENFSATTPPLLSARAIESIFSTFGARKIGHEIGMVMTIAMRFVPVLALEADRILKAQIARGANFERGKFFDRIRALVVIIVPLLISALRKAEELAVAMEARLYTGEPPKTRFKDIKWKPMDTLYVLLTAGVLVLVLFGRYFVDGVFQYGS.

6 helical membrane-spanning segments follow: residues 38 to 58 (LIVP…LLMF), 66 to 86 (IYLA…LVQF), 104 to 124 (IWSA…AENF), 149 to 169 (IGHE…VLAL), 197 to 217 (LVVI…ELAV), and 243 to 263 (TLYV…RYFV).

Belongs to the energy-coupling factor EcfT family. As to quaternary structure, forms a stable energy-coupling factor (ECF) transporter complex composed of 2 membrane-embedded substrate-binding proteins (S component, RibU, BioY), 2 ATP-binding proteins (A component) and 2 transmembrane proteins (T component) upon coexpression in E.coli. A stable subcomplex with both A and T components are also isolated. This complex interacts with at least 2 substrate-specific components, BioY and RibU.

It is found in the cell inner membrane. Functionally, transmembrane (T) component of an energy-coupling factor (ECF) ABC-transporter complex. Unlike classic ABC transporters this ECF transporter provides the energy necessary to transport a number of different substrates. Expression of the complex plus RibU in E.coli allows riboflavin uptake; uptake does not occur in the absence of RibU or the EcfA1A2T complex. The sequence is that of Energy-coupling factor transporter transmembrane protein EcfT (ecfT) from Thermotoga maritima (strain ATCC 43589 / DSM 3109 / JCM 10099 / NBRC 100826 / MSB8).